A 538-amino-acid polypeptide reads, in one-letter code: Nicotinate phosphoribosyltransferase (538 aa).

Tyr21 and Thr210 together coordinate nicotinate. A Phosphohistidine modification is found at His213. Residue Arg318 participates in nicotinate binding. 5-phospho-alpha-D-ribose 1-diphosphate is bound at residue Thr380. Ser537 bears the Phosphoserine mark.

The protein belongs to the NAPRTase family. Homodimer. Requires Mg(2+) as cofactor. Mn(2+) serves as cofactor. Transiently phosphorylated on a His residue during the reaction cycle. Phosphorylation strongly increases the affinity for substrates and increases the rate of nicotinate D-ribonucleotide production. Dephosphorylation regenerates the low-affinity form of the enzyme, leading to product release.

Its subcellular location is the cytoplasm. It is found in the cytosol. It carries out the reaction nicotinate + 5-phospho-alpha-D-ribose 1-diphosphate + ATP + H2O = nicotinate beta-D-ribonucleotide + ADP + phosphate + diphosphate. It participates in cofactor biosynthesis; NAD(+) biosynthesis; nicotinate D-ribonucleotide from nicotinate: step 1/1. Catalyzes the first step in the biosynthesis of NAD from nicotinic acid, the ATP-dependent synthesis of beta-nicotinate D-ribonucleotide from nicotinate and 5-phospho-D-ribose 1-phosphate. Helps prevent cellular oxidative stress via its role in NAD biosynthesis. The polypeptide is Nicotinate phosphoribosyltransferase (NAPRT) (Homo sapiens (Human)).